A 252-amino-acid polypeptide reads, in one-letter code: Triosephosphate isomerase (252 aa).

Position 10–12 (10–12 (NWK)) interacts with substrate. Residue H96 is the Electrophile of the active site. E168 serves as the catalytic Proton acceptor. Substrate is bound by residues G174, S214, and 235–236 (GG).

It belongs to the triosephosphate isomerase family. As to quaternary structure, homodimer.

The protein localises to the cytoplasm. The catalysed reaction is D-glyceraldehyde 3-phosphate = dihydroxyacetone phosphate. It functions in the pathway carbohydrate biosynthesis; gluconeogenesis. Its pathway is carbohydrate degradation; glycolysis; D-glyceraldehyde 3-phosphate from glycerone phosphate: step 1/1. Its function is as follows. Involved in the gluconeogenesis. Catalyzes stereospecifically the conversion of dihydroxyacetone phosphate (DHAP) to D-glyceraldehyde-3-phosphate (G3P). The chain is Triosephosphate isomerase from Streptococcus gordonii (strain Challis / ATCC 35105 / BCRC 15272 / CH1 / DL1 / V288).